Consider the following 157-residue polypeptide: Transcriptional repressor NrdR (157 aa).

The interval 1 to 22 (MKCPYCSSPDSRVINSRPSDDG) is disordered. The segment at 3–34 (CPYCSSPDSRVINSRPSDDGASIRRRRECLTC) is a zinc-finger region. Positions 8 to 17 (SPDSRVINSR) are enriched in polar residues. Residues 49–136 (LMVVKRSGVR…VYRDFDSLER (88 aa)) form the ATP-cone domain.

It belongs to the NrdR family. Requires Zn(2+) as cofactor.

Its function is as follows. Negatively regulates transcription of bacterial ribonucleotide reductase nrd genes and operons by binding to NrdR-boxes. The polypeptide is Transcriptional repressor NrdR (Deinococcus radiodurans (strain ATCC 13939 / DSM 20539 / JCM 16871 / CCUG 27074 / LMG 4051 / NBRC 15346 / NCIMB 9279 / VKM B-1422 / R1)).